Reading from the N-terminus, the 286-residue chain is Phosphatidylserine decarboxylase proenzyme (286 aa).

Catalysis depends on charge relay system; for autoendoproteolytic cleavage activity residues aspartate 90, histidine 147, and serine 253. Residue serine 253 is the Schiff-base intermediate with substrate; via pyruvic acid; for decarboxylase activity of the active site. Serine 253 carries the post-translational modification Pyruvic acid (Ser); by autocatalysis.

This sequence belongs to the phosphatidylserine decarboxylase family. PSD-B subfamily. Prokaryotic type I sub-subfamily. In terms of assembly, heterodimer of a large membrane-associated beta subunit and a small pyruvoyl-containing alpha subunit. It depends on pyruvate as a cofactor. In terms of processing, is synthesized initially as an inactive proenzyme. Formation of the active enzyme involves a self-maturation process in which the active site pyruvoyl group is generated from an internal serine residue via an autocatalytic post-translational modification. Two non-identical subunits are generated from the proenzyme in this reaction, and the pyruvate is formed at the N-terminus of the alpha chain, which is derived from the carboxyl end of the proenzyme. The autoendoproteolytic cleavage occurs by a canonical serine protease mechanism, in which the side chain hydroxyl group of the serine supplies its oxygen atom to form the C-terminus of the beta chain, while the remainder of the serine residue undergoes an oxidative deamination to produce ammonia and the pyruvoyl prosthetic group on the alpha chain. During this reaction, the Ser that is part of the protease active site of the proenzyme becomes the pyruvoyl prosthetic group, which constitutes an essential element of the active site of the mature decarboxylase.

It localises to the cell membrane. It carries out the reaction a 1,2-diacyl-sn-glycero-3-phospho-L-serine + H(+) = a 1,2-diacyl-sn-glycero-3-phosphoethanolamine + CO2. The protein operates within phospholipid metabolism; phosphatidylethanolamine biosynthesis; phosphatidylethanolamine from CDP-diacylglycerol: step 2/2. Catalyzes the formation of phosphatidylethanolamine (PtdEtn) from phosphatidylserine (PtdSer). The sequence is that of Phosphatidylserine decarboxylase proenzyme from Pseudoalteromonas atlantica (strain T6c / ATCC BAA-1087).